Here is a 266-residue protein sequence, read N- to C-terminus: Transcription factor atoh8 (266 aa).

The segment at 140 to 164 is disordered; sequence AASQAPAGGSERAESPRKRAGEPSG. Residues 150–160 are compositionally biased toward basic and acidic residues; it reads ERAESPRKRAG. The tract at residues 175–188 is basic motif; degenerate; the sequence is TRRLLANARERTRV. The region spanning 175-227 is the bHLH domain; that stretch reads TRRLLANARERTRVHTISAAFEALRKQVPCYSYGQKLSKLAILRIACNYILSL. A helix-loop-helix motif region spans residues 189 to 227; that stretch reads HTISAAFEALRKQVPCYSYGQKLSKLAILRIACNYILSL.

The protein localises to the nucleus. It localises to the nucleus speckle. The protein resides in the cytoplasm. In terms of biological role, transcription factor that binds a palindromic (canonical) core consensus DNA sequence 5'-CANNTG- 3' known as an E-box element, possibly as a heterodimer with other bHLH proteins. During development, is required for heart looping and swim bladder formation by acting in concert with GATA4 and ZFPM1. During the development of both the retina and skeletal muscles is required for neural retinal cell through modulating PAX6 and NEUROG3 expression and myogenic differentiation. This Danio rerio (Zebrafish) protein is Transcription factor atoh8.